Here is a 304-residue protein sequence, read N- to C-terminus: MSLMVVSMACVGFFLLQGAWPHEGVHRKPSLLAHPGPLVKSEETVILQCWSDVRFEHFLLHREGKYKDTLHLIGEHHDGVSKANFSIGPMMQDLAGTYRCYGSVTHSPYQLSAPSDPLDIVITGLYEKPSLSAQPGPTVLAGESVTLSCSSRSSYDMYHLSREGEAHERRFSAGPKVNGTFQADFPLGPATHGGTYRCFGSFRDSPYEWSNSSDPLLVSVTGNPSNSWPSPTEPSSKTGNPRHLHVLIGTSVVKIPFTILLFFLLHRWCSNKKNAAVMDQEPAGNRTVNSEDSDEQDHQEVSYA.

Residues 1–21 form the signal peptide; the sequence is MSLMVVSMACVGFFLLQGAWP. Residues 22-245 lie on the Extracellular side of the membrane; sequence HEGVHRKPSL…SKTGNPRHLH (224 aa). 2 Ig-like C2-type domains span residues 42 to 107 and 142 to 205; these read EETV…VTHS and GESV…FRDS. Intrachain disulfides connect cysteine 49–cysteine 100 and cysteine 149–cysteine 198. Residues asparagine 84, asparagine 178, and asparagine 211 are each glycosylated (N-linked (GlcNAc...) asparagine). The interval 220-239 is disordered; sequence VTGNPSNSWPSPTEPSSKTG. Residues 246–265 traverse the membrane as a helical segment; the sequence is VLIGTSVVKIPFTILLFFLL. Topologically, residues 266-304 are cytoplasmic; sequence HRWCSNKKNAAVMDQEPAGNRTVNSEDSDEQDHQEVSYA. Positions 280 to 304 are disordered; the sequence is QEPAGNRTVNSEDSDEQDHQEVSYA.

Belongs to the immunoglobulin superfamily.

Its subcellular location is the cell membrane. In terms of biological role, receptor on natural killer (NK) cells for HLA-C alleles. Does not inhibit the activity of NK cells. The chain is Killer cell immunoglobulin-like receptor 2DS2 from Homo sapiens (Human).